The chain runs to 161 residues: MEIGNVKADVNLVLNLREAERHRRYFDYFIDEILWLSFLGMSETSLKEEEVTLGGVKETREEECSDDKLVLDICLKRKRLDEEEEEEVVEEENDGFKTPTRPENRIPIVRECPPAPMKRSSEMFRGRTMYCRRRLSFLPEDDVNSFITDLQWRTTTMTIKK.

Residues 84-93 (EEEEVVEEEN) are compositionally biased toward acidic residues. The segment at 84–106 (EEEEVVEEENDGFKTPTRPENRI) is disordered.

Probable cyclin-dependent protein kinase (CDK) inhibitor that functions as a repressor of mitosis in the endoreduplication cell cycle. The sequence is that of Cyclin-dependent protein kinase inhibitor SMR12 from Arabidopsis thaliana (Mouse-ear cress).